An 82-amino-acid chain; its full sequence is Chaperone protein DnaJ 1 (82 aa).

Residues Tyr-1–Asp-33 are disordered.

Belongs to the DnaJ family. In terms of assembly, homodimer. Zn(2+) is required as a cofactor.

The protein localises to the cytoplasm. Functionally, participates actively in the response to hyperosmotic and heat shock by preventing the aggregation of stress-denatured proteins and by disaggregating proteins, also in an autonomous, DnaK-independent fashion. Unfolded proteins bind initially to DnaJ; upon interaction with the DnaJ-bound protein, DnaK hydrolyzes its bound ATP, resulting in the formation of a stable complex. GrpE releases ADP from DnaK; ATP binding to DnaK triggers the release of the substrate protein, thus completing the reaction cycle. Several rounds of ATP-dependent interactions between DnaJ, DnaK and GrpE are required for fully efficient folding. Also involved, together with DnaK and GrpE, in the DNA replication of plasmids through activation of initiation proteins. This is Chaperone protein DnaJ 1 (dnaJ1) from Streptomyces albus G.